The following is a 3567-amino-acid chain: Sushi, von Willebrand factor type A, EGF and pentraxin domain-containing protein 1 (3567 aa).

An N-terminal signal peptide occupies residues 1 to 17; it reads MWSRLAFCCWALALVSG. In terms of domain architecture, VWFA spans 84-265; sequence ELVFLVDESS…LARRALHEDL (182 aa). N-linked (GlcNAc...) asparagine glycosylation is present at Asn-187. 3 consecutive Sushi domains span residues 377–436, 437–496, and 497–561; these read VHCP…FCRV, RTCP…RCVE, and RHCA…VCKD. Cystine bridges form between Cys-379–Cys-421, Cys-407–Cys-434, Cys-439–Cys-481, Cys-467–Cys-494, Cys-499–Cys-544, and Cys-530–Cys-559. 2 consecutive HYR domains span residues 560-644 and 645-724; these read KDVE…KVID and VEPP…VIKG. The region spanning 725–789 is the Sushi 4 domain; sequence SPCEVPFTPV…YSTEWPDCAI (65 aa). Intrachain disulfides connect Cys-727-Cys-769, Cys-753-Cys-787, Cys-1196-Cys-1207, Cys-1201-Cys-1216, Cys-1218-Cys-1227, Cys-1234-Cys-1245, Cys-1239-Cys-1254, Cys-1256-Cys-1265, Cys-1272-Cys-1283, Cys-1277-Cys-1292, Cys-1294-Cys-1303, Cys-1310-Cys-1321, Cys-1315-Cys-1330, Cys-1332-Cys-1341, Cys-1348-Cys-1359, Cys-1353-Cys-1368, Cys-1370-Cys-1379, Cys-1386-Cys-1397, Cys-1391-Cys-1406, and Cys-1408-Cys-1417. In terms of domain architecture, EGF-like 1 spans 1192 to 1228; sequence VFHECFLNPCHNSGTCQQLGRGYVCLCPPGYTGLKCE. In terms of domain architecture, EGF-like 2; calcium-binding spans 1230–1266; it reads DIDECSSLPCLNGGICRDQVGGFTCECSLGYSGQICE. The EGF-like 3; calcium-binding domain occupies 1268 to 1304; the sequence is NINECISSPCLNKGTCTDGLASYRCTCVKGYMGVHCE. The 37-residue stretch at 1306–1342 folds into the EGF-like 4; calcium-binding domain; sequence DVNECQSSPCLNNAVCKDQVGGFSCKCPPGFLGTRCE. The EGF-like 5; calcium-binding domain maps to 1344-1380; it reads NVDECLSQPCQNGATCKDGANSFRCQCPAGFTGTHCE. Positions 1382 to 1418 constitute an EGF-like 6; calcium-binding domain; that stretch reads NINECQSNPCRNQATCVDELNSYSCKCQPGFSGHRCE. One can recognise a Pentraxin (PTX) domain in the interval 1423–1627; that stretch reads SGFNLDFEVS…VKVDSSSMFC (205 aa). Sushi domains follow at residues 1628–1686 and 1687–1744; these read SDCP…HCER and IRCG…SCLD. 35 disulfide bridges follow: Cys-1630-Cys-1671, Cys-1657-Cys-1684, Cys-1689-Cys-1729, Cys-1715-Cys-1742, Cys-1748-Cys-1760, Cys-1754-Cys-1769, Cys-1771-Cys-1782, Cys-1788-Cys-1828, Cys-1814-Cys-1841, Cys-1846-Cys-1886, Cys-1872-Cys-1899, Cys-1904-Cys-1944, Cys-1930-Cys-1957, Cys-1962-Cys-2002, Cys-1988-Cys-2015, Cys-2020-Cys-2060, Cys-2046-Cys-2077, Cys-2082-Cys-2125, Cys-2111-Cys-2140, Cys-2145-Cys-2185, Cys-2171-Cys-2198, Cys-2203-Cys-2244, Cys-2230-Cys-2258, Cys-2263-Cys-2303, Cys-2289-Cys-2317, Cys-2322-Cys-2362, Cys-2348-Cys-2375, Cys-2380-Cys-2421, Cys-2407-Cys-2434, Cys-2439-Cys-2479, Cys-2465-Cys-2492, Cys-2497-Cys-2537, Cys-2523-Cys-2550, Cys-2555-Cys-2595, and Cys-2581-Cys-2607. Residues 1744–1783 enclose the EGF-like 7; calcium-binding domain; sequence DVDECAVGSDCSEHASCLNTNGSYVCSCNPPYTGDGKNCA. Sushi domains follow at residues 1780–1843, 1844–1901, 1902–1959, 1960–2017, 2018–2079, 2080–2142, 2143–2200, 2201–2260, 2261–2319, 2320–2377, 2378–2436, 2437–2494, 2495–2552, and 2553–2609; these read KNCA…SCEA, ISCG…VCEL, VKCS…SCQL, VSCG…QCLA, VSCD…RCIA, HFCE…QCIP, VRCG…TCHP, VSCN…SCTP, LNCG…KCVP, TKCA…ICKM, VLCP…ECVP, VECP…MCKP, IECP…SCDA, and IHCS…TCVP. The tract at residues 2638-2645 is important for the interaction with integrin ITGA9:ITGB1; the sequence is DMMEVPYL. Sushi domains follow at residues 2660 to 2711, 2712 to 2769, 2770 to 2827, 2828 to 2885, 2886 to 2943, 2944 to 3001, 3002 to 3057, 3058 to 3115, 3116 to 3174, 3175 to 3234, 3235 to 3292, 3293 to 3350, 3351 to 3409, and 3410 to 3466; these read NTKE…SCIS, IECD…RCEA, ISCS…MCIP, VDCG…SCMP, VRCP…VCKP, ATCG…SCLP, CRCS…LCEH, AQCG…TCEP, LSCG…TCSP, KKCP…SCIP, VVCG…VCRE, NRCE…LCKP, NPCP…RCEK, and ISCG…VCRA. 33 disulfide bridges follow: Cys-2682-Cys-2709, Cys-2714-Cys-2754, Cys-2740-Cys-2767, Cys-2772-Cys-2812, Cys-2798-Cys-2825, Cys-2830-Cys-2870, Cys-2856-Cys-2883, Cys-2888-Cys-2928, Cys-2914-Cys-2941, Cys-2946-Cys-2986, Cys-2972-Cys-2999, Cys-3004-Cys-3043, Cys-3029-Cys-3055, Cys-3060-Cys-3100, Cys-3086-Cys-3113, Cys-3118-Cys-3159, Cys-3144-Cys-3172, Cys-3177-Cys-3217, Cys-3203-Cys-3232, Cys-3237-Cys-3277, Cys-3263-Cys-3290, Cys-3295-Cys-3335, Cys-3321-Cys-3348, Cys-3353-Cys-3394, Cys-3380-Cys-3407, Cys-3412-Cys-3452, Cys-3438-Cys-3464, Cys-3500-Cys-3510, Cys-3504-Cys-3516, Cys-3518-Cys-3527, Cys-3532-Cys-3542, Cys-3536-Cys-3548, and Cys-3550-Cys-3559. EGF-like domains follow at residues 3496–3528 and 3529–3560; these read EEPICILPCLNGGRCVAPYQCDCPTGWTGSRCH and TATCQSPCLNGGKCIRPNRCHCLSAWTGHDCS.

Interacts (via Sushi domain 21) with ITGA9:ITGB1; thereby inhibits Ca(2+) intracellular signaling and as a result represses vasocontraction. Interacts (via Sushi domain 21) with ITGA4:ITGB1; thereby inhibits Ca(2+) intracellular signaling and as a result represses vasocontraction. Interacts with ANGPT1 and ANGPT2. Interacts with PEAR1 (via extracellular domain). Interacts with HSPG2, TLN1, FN1, COPA, CCT2, IQGAP1, LAMC1 and NID1. Interacts (via C-terminus) with TIE1. In terms of tissue distribution, expressed in the media layer of the arterial wall (at protein level). Highly expressed in lung and placenta, weakly expressed in the kidney, heart, brain and spleen. Also expressed in bone and periosteum, but not in cartilage and skeletal muscle.

It localises to the secreted. Its subcellular location is the nucleus. It is found in the cytoplasm. The protein resides in the membrane. Its function is as follows. Required for morphological development, cell alignment and migration of lymphatic endothelial cells during embryonic development, potentially via modulation of ANGPT2-TIE1 signaling and subsequent activation of FOXC2 transcription. Required for embryonic lymphatic vascular development, via mediating the correct formation of the first lymphovenous contact site and tight association of the lymphatic endothelium with the venous endothelium. Represses PRKCA-mediated L-type voltage-gated channel Ca(2+) influx and ROCK-mediated calcium sensitivity in vascular smooth muscle cells, via its interaction with integrins, thereby inhibiting vasocontraction. Promotes platelet activation, via its interaction with PEAR1 and subsequent activation of AKT/mTOR signaling. Plays a role in epidermal development and keratinocyte differentiation, independent of cell-cell adhesion. May play a role in initial cell attachment of stromal osteogenic cells. May promote myoblast cell adhesion when in the presence of integrin ITGA9:ITGB1. The polypeptide is Sushi, von Willebrand factor type A, EGF and pentraxin domain-containing protein 1 (Svep1) (Mus musculus (Mouse)).